A 502-amino-acid polypeptide reads, in one-letter code: Keratin, type II microfibrillar, component 5 (502 aa).

At serine 1 the chain carries Blocked amino end (Ser). The segment at 1–122 (SCRSYRISPG…PNAQCVKHQE (122 aa)) is head. One can recognise an IF rod domain in the interval 122–433 (EKEQIKNLNS…RLLEGEEQRL (312 aa)). The tract at residues 123 to 157 (KEQIKNLNSRFAAFIDKVRFLEQQNKLLETKWQFY) is coil 1A. Residues 158-167 (QNQRCCESNL) are linker 1. The tract at residues 168-268 (EPLFNGYIET…YDEEIQILNA (101 aa)) is coil 1B. Lysine 228 is covalently cross-linked (Glycyl lysine isopeptide (Lys-Gly) (interchain with G-Cter in SUMO1)). The interval 269 to 285 (HISDTSVIVKMDNSRDL) is linker 12. The tract at residues 286-429 (NMDCVVAEIK…ATYRRLLEGE (144 aa)) is coil 2. A tail region spans residues 430–502 (EQRLCEGVGS…CGSSRSVRFA (73 aa)).

It belongs to the intermediate filament family. As to expression, hard keratin wool.

Functionally, wool microfibrillar keratin. This is Keratin, type II microfibrillar, component 5 from Ovis aries (Sheep).